The sequence spans 693 residues: Translation initiation factor IF-2 (693 aa).

In terms of domain architecture, tr-type G spans 181-349 (PRPPVVTVMG…MILLVAEMNE (169 aa)). Residues 190-197 (GHVDHGKT) are G1. 190-197 (GHVDHGKT) contacts GTP. The G2 stretch occupies residues 215–219 (GITQS). The segment at 236 to 239 (DTPG) is G3. Residues 236 to 240 (DTPGH) and 290 to 293 (NKID) each bind GTP. The G4 stretch occupies residues 290–293 (NKID). The tract at residues 327–329 (SAR) is G5.

Belongs to the TRAFAC class translation factor GTPase superfamily. Classic translation factor GTPase family. IF-2 subfamily.

The protein resides in the cytoplasm. One of the essential components for the initiation of protein synthesis. Protects formylmethionyl-tRNA from spontaneous hydrolysis and promotes its binding to the 30S ribosomal subunits. Also involved in the hydrolysis of GTP during the formation of the 70S ribosomal complex. The sequence is that of Translation initiation factor IF-2 from Thermotoga petrophila (strain ATCC BAA-488 / DSM 13995 / JCM 10881 / RKU-1).